Reading from the N-terminus, the 599-residue chain is NADH-quinone oxidoreductase subunit C/D (599 aa).

Residues Met-1–Glu-190 form an NADH dehydrogenase I subunit C region. The interval Asp-214–Arg-599 is NADH dehydrogenase I subunit D.

The protein in the N-terminal section; belongs to the complex I 30 kDa subunit family. In the C-terminal section; belongs to the complex I 49 kDa subunit family. In terms of assembly, NDH-1 is composed of 13 different subunits. Subunits NuoB, CD, E, F, and G constitute the peripheral sector of the complex.

It is found in the cell inner membrane. The enzyme catalyses a quinone + NADH + 5 H(+)(in) = a quinol + NAD(+) + 4 H(+)(out). NDH-1 shuttles electrons from NADH, via FMN and iron-sulfur (Fe-S) centers, to quinones in the respiratory chain. The immediate electron acceptor for the enzyme in this species is believed to be ubiquinone. Couples the redox reaction to proton translocation (for every two electrons transferred, four hydrogen ions are translocated across the cytoplasmic membrane), and thus conserves the redox energy in a proton gradient. The sequence is that of NADH-quinone oxidoreductase subunit C/D from Photorhabdus laumondii subsp. laumondii (strain DSM 15139 / CIP 105565 / TT01) (Photorhabdus luminescens subsp. laumondii).